The following is a 511-amino-acid chain: Bifunctional purine biosynthesis protein PurH (511 aa).

The region spanning 1-145 (MKKRALVSVS…KNHKFVSVIV (145 aa)) is the MGS-like domain.

Belongs to the PurH family.

It carries out the reaction (6R)-10-formyltetrahydrofolate + 5-amino-1-(5-phospho-beta-D-ribosyl)imidazole-4-carboxamide = 5-formamido-1-(5-phospho-D-ribosyl)imidazole-4-carboxamide + (6S)-5,6,7,8-tetrahydrofolate. The enzyme catalyses IMP + H2O = 5-formamido-1-(5-phospho-D-ribosyl)imidazole-4-carboxamide. It functions in the pathway purine metabolism; IMP biosynthesis via de novo pathway; 5-formamido-1-(5-phospho-D-ribosyl)imidazole-4-carboxamide from 5-amino-1-(5-phospho-D-ribosyl)imidazole-4-carboxamide (10-formyl THF route): step 1/1. It participates in purine metabolism; IMP biosynthesis via de novo pathway; IMP from 5-formamido-1-(5-phospho-D-ribosyl)imidazole-4-carboxamide: step 1/1. This is Bifunctional purine biosynthesis protein PurH from Bacillus cereus (strain Q1).